The following is a 959-amino-acid chain: Ribonucleoside-diphosphate reductase large subunit (959 aa).

Substrate-binding positions include T68, 83–84, and G112; that span reads SC. C84 and C626 are oxidised to a cystine. N270 serves as the catalytic Proton acceptor. Residues 378–508 form the DOD-type homing endonuclease domain; sequence LPTLFGNSEH…IQLLLIGMGV (131 aa). C611 acts as the Cysteine radical intermediate in catalysis. E613 serves as the catalytic Proton acceptor. A substrate-binding site is contributed by 751-755; sequence PTATS.

It belongs to the ribonucleoside diphosphate reductase large chain family. In terms of assembly, heterotetramer composed of a homodimer of the large subunit (R1) and a homodimer of the small subunit (R2). Larger multisubunit protein complex are also active, composed of (R1)n(R2)n.

It catalyses the reaction a 2'-deoxyribonucleoside 5'-diphosphate + [thioredoxin]-disulfide + H2O = a ribonucleoside 5'-diphosphate + [thioredoxin]-dithiol. Its activity is regulated as follows. Under complex allosteric control mediated by deoxynucleoside triphosphates and ATP binding. The type of nucleotide bound at the specificity site determines substrate preference. It seems probable that ATP makes the enzyme reduce CDP and UDP, dGTP favors ADP reduction and dTTP favors GDP reduction. In terms of biological role, ribonucleoside-diphosphate reductase holoenzyme provides the precursors necessary for viral DNA synthesis. Allows virus growth in non-dividing cells. Catalyzes the biosynthesis of deoxyribonucleotides from the corresponding ribonucleotides. The polypeptide is Ribonucleoside-diphosphate reductase large subunit (Acheta domesticus (House cricket)).